The primary structure comprises 700 residues: Elongation factor G 1 (700 aa).

The 283-residue stretch at 8–290 (ERYRNIGISA…AVIDYLPSPA (283 aa)) folds into the tr-type G domain. GTP is bound by residues 17-24 (AHIDAGKT), 88-92 (DTPGH), and 142-145 (NKMD).

This sequence belongs to the TRAFAC class translation factor GTPase superfamily. Classic translation factor GTPase family. EF-G/EF-2 subfamily.

The protein resides in the cytoplasm. Its function is as follows. Catalyzes the GTP-dependent ribosomal translocation step during translation elongation. During this step, the ribosome changes from the pre-translocational (PRE) to the post-translocational (POST) state as the newly formed A-site-bound peptidyl-tRNA and P-site-bound deacylated tRNA move to the P and E sites, respectively. Catalyzes the coordinated movement of the two tRNA molecules, the mRNA and conformational changes in the ribosome. The sequence is that of Elongation factor G 1 from Bordetella parapertussis (strain 12822 / ATCC BAA-587 / NCTC 13253).